The following is a 372-amino-acid chain: Probable G-protein coupled receptor 45 (372 aa).

The Extracellular segment spans residues 1 to 38; that stretch reads MACNSTSLEAYTYLLLNTSNASDSGSTQLPAPLRISLA. 3 N-linked (GlcNAc...) asparagine glycosylation sites follow: asparagine 4, asparagine 17, and asparagine 20. A helical transmembrane segment spans residues 39–59; the sequence is IVMLLMTVVGFLGNTVVCIIV. Topologically, residues 60–75 are cytoplasmic; it reads YQRPAMRSAINLLLAT. The chain crosses the membrane as a helical span at residues 76–96; sequence LAFSDIMLSLCCMPFTAVTLI. Topologically, residues 97–109 are extracellular; it reads TVRWHFGDHFCRL. Residues 110–130 traverse the membrane as a helical segment; the sequence is SATLYWFFVLEGVAILLIISV. Topologically, residues 131–149 are cytoplasmic; the sequence is DRFLIIVQRQDKLNPRRAK. Residues 150-170 form a helical membrane-spanning segment; it reads VIIAVSWVLSFCIAGPSLTGW. Topologically, residues 171 to 198 are extracellular; sequence TLVEVPARAPQCVLGYTELPADRAYVVT. Residues 199–219 traverse the membrane as a helical segment; that stretch reads LVVAVFFAPFGVMLCAYMCIL. Over 220–268 the chain is Cytoplasmic; that stretch reads NTVRKNAVRVHNQSDSLDLRQLTRAGLRRLQRQQQVSVDLSFKTKAFTT. A helical transmembrane segment spans residues 269–289; the sequence is ILILFVGFSLCWLPHSVYSLL. Residues 290-305 lie on the Extracellular side of the membrane; that stretch reads SVFSQRFYCGSSFYAT. Residues 306 to 326 traverse the membrane as a helical segment; sequence STCVLWLSYLKSVFNPIVYCW. The Cytoplasmic segment spans residues 327–372; it reads RIKKFREACIELLPQTFQILPKVPERIRRRIQPSTVYVCNENQSAV.

This sequence belongs to the G-protein coupled receptor 1 family. In terms of tissue distribution, expressed in brain; detected in the basal forebrain, frontal cortex, and caudate, but not in thalamus, hippocampus, or putamen.

Its subcellular location is the cell membrane. Its function is as follows. Orphan receptor. May play a role in brain function. The chain is Probable G-protein coupled receptor 45 (GPR45) from Homo sapiens (Human).